Reading from the N-terminus, the 353-residue chain is F-box protein At2g14290 (353 aa).

In terms of domain architecture, F-box spans 6–58 (PRTWSELPPDLLGSIFHRLSFTDFHRAKIVCWNWNLSSKLTVPKKIRSPWLML).

The chain is F-box protein At2g14290 from Arabidopsis thaliana (Mouse-ear cress).